The following is a 399-amino-acid chain: Phosphoglycerate kinase (399 aa).

Residues 22 to 24, arginine 38, 61 to 64, arginine 120, and arginine 153 contribute to the substrate site; these read DFN and HLGR. Residues lysine 204, glutamate 326, and 352-355 each bind ATP; that span reads GGDT.

It belongs to the phosphoglycerate kinase family. As to quaternary structure, monomer.

It localises to the cytoplasm. The enzyme catalyses (2R)-3-phosphoglycerate + ATP = (2R)-3-phospho-glyceroyl phosphate + ADP. It participates in carbohydrate degradation; glycolysis; pyruvate from D-glyceraldehyde 3-phosphate: step 2/5. The sequence is that of Phosphoglycerate kinase from Pelobacter propionicus (strain DSM 2379 / NBRC 103807 / OttBd1).